The following is a 295-amino-acid chain: MEIRRRPPNPSIKVANLEYAIPHPDSKPKNILEEIVWEKHLEVEIARKKVSLEDLKKKIKDLPKTKNFIDALRNSNSKPALISEIKKASPSRGIIREDFDAKMIGKMYQEGGANCISVLTDKKFFQGGFDVLVEVRKEIIIPILCKDFILYPYQLYQARAAGADAALLIAAILTDSDLKYLSKVAEHLGLTILVEVHDSEELERVLNINVFNLIGINNRNLKSFKTDLEVTKKLAKNYANQIKENSITLVSESGLFNREDLDLVKSYGADAVLVGESLMSQEDILGGVKKLVGNL.

This sequence belongs to the TrpC family.

The enzyme catalyses 1-(2-carboxyphenylamino)-1-deoxy-D-ribulose 5-phosphate + H(+) = (1S,2R)-1-C-(indol-3-yl)glycerol 3-phosphate + CO2 + H2O. It participates in amino-acid biosynthesis; L-tryptophan biosynthesis; L-tryptophan from chorismate: step 4/5. This chain is Indole-3-glycerol phosphate synthase, found in Prochlorococcus marinus (strain NATL1A).